A 406-amino-acid chain; its full sequence is Multifunctional CCA protein (406 aa).

Positions 8 and 11 each coordinate ATP. Gly8 and Arg11 together coordinate CTP. 2 residues coordinate Mg(2+): Asp21 and Asp23. Residues Arg91, Arg138, and Arg141 each coordinate ATP. CTP contacts are provided by Arg91, Arg138, and Arg141. An HD domain is found at 229–331 (TGIHQEMVSD…LELLGRCDAL (103 aa)).

This sequence belongs to the tRNA nucleotidyltransferase/poly(A) polymerase family. Bacterial CCA-adding enzyme type 1 subfamily. In terms of assembly, monomer. Can also form homodimers and oligomers. The cofactor is Mg(2+). Requires Ni(2+) as cofactor.

The enzyme catalyses a tRNA precursor + 2 CTP + ATP = a tRNA with a 3' CCA end + 3 diphosphate. It catalyses the reaction a tRNA with a 3' CCA end + 2 CTP + ATP = a tRNA with a 3' CCACCA end + 3 diphosphate. Functionally, catalyzes the addition and repair of the essential 3'-terminal CCA sequence in tRNAs without using a nucleic acid template. Adds these three nucleotides in the order of C, C, and A to the tRNA nucleotide-73, using CTP and ATP as substrates and producing inorganic pyrophosphate. tRNA 3'-terminal CCA addition is required both for tRNA processing and repair. Also involved in tRNA surveillance by mediating tandem CCA addition to generate a CCACCA at the 3' terminus of unstable tRNAs. While stable tRNAs receive only 3'-terminal CCA, unstable tRNAs are marked with CCACCA and rapidly degraded. This Stenotrophomonas maltophilia (strain K279a) protein is Multifunctional CCA protein.